The sequence spans 299 residues: Probable arylamine N-acetyltransferase 2 (299 aa).

Cys-75 (acyl-thioester intermediate) is an active-site residue. Residues His-115 and Asp-130 contribute to the active site.

This sequence belongs to the arylamine N-acetyltransferase family.

The enzyme catalyses an arylamine + acetyl-CoA = an N-acetylarylamine + CoA. This chain is Probable arylamine N-acetyltransferase 2, found in Dictyostelium discoideum (Social amoeba).